The following is a 286-amino-acid chain: Thiazole synthase (286 aa).

Residue K122 is the Schiff-base intermediate with DXP of the active site. Residues G183, 209–210 (AG), and 231–232 (NT) contribute to the 1-deoxy-D-xylulose 5-phosphate site.

This sequence belongs to the ThiG family. As to quaternary structure, homotetramer. Forms heterodimers with either ThiH or ThiS.

The protein resides in the cytoplasm. It carries out the reaction [ThiS sulfur-carrier protein]-C-terminal-Gly-aminoethanethioate + 2-iminoacetate + 1-deoxy-D-xylulose 5-phosphate = [ThiS sulfur-carrier protein]-C-terminal Gly-Gly + 2-[(2R,5Z)-2-carboxy-4-methylthiazol-5(2H)-ylidene]ethyl phosphate + 2 H2O + H(+). Its pathway is cofactor biosynthesis; thiamine diphosphate biosynthesis. In terms of biological role, catalyzes the rearrangement of 1-deoxy-D-xylulose 5-phosphate (DXP) to produce the thiazole phosphate moiety of thiamine. Sulfur is provided by the thiocarboxylate moiety of the carrier protein ThiS. In vitro, sulfur can be provided by H(2)S. This chain is Thiazole synthase, found in Synechococcus elongatus (strain ATCC 33912 / PCC 7942 / FACHB-805) (Anacystis nidulans R2).